Reading from the N-terminus, the 523-residue chain is Na(+)/H(+) antiporter NhaB (523 aa).

10 helical membrane passes run 28–48, 51–71, 89–109, 137–157, 237–257, 302–322, 347–367, 390–410, 445–465, and 476–496; these read FLII…WLLV, FIFT…GLLA, LSAN…IYFV, MAAF…VISI, FFIR…ATCV, AIIC…VGLI, TESL…AVII, LFYI…VGTV, VATP…LAPL, and MALP…MYLL.

It belongs to the NhaB Na(+)/H(+) (TC 2.A.34) antiporter family.

It is found in the cell inner membrane. The enzyme catalyses 2 Na(+)(in) + 3 H(+)(out) = 2 Na(+)(out) + 3 H(+)(in). Its function is as follows. Na(+)/H(+) antiporter that extrudes sodium in exchange for external protons. The polypeptide is Na(+)/H(+) antiporter NhaB (Tolumonas auensis (strain DSM 9187 / NBRC 110442 / TA 4)).